A 1241-amino-acid polypeptide reads, in one-letter code: DNA-directed RNA polymerase subunit beta (1241 aa).

Residues 1201-1224 (AEEEQDTDVDYITEDDFESPDPEI) form a disordered region.

This sequence belongs to the RNA polymerase beta chain family. As to quaternary structure, the RNAP catalytic core consists of 2 alpha, 1 beta, 1 beta' and 1 omega subunit. When a sigma factor is associated with the core the holoenzyme is formed, which can initiate transcription.

It carries out the reaction RNA(n) + a ribonucleoside 5'-triphosphate = RNA(n+1) + diphosphate. DNA-dependent RNA polymerase catalyzes the transcription of DNA into RNA using the four ribonucleoside triphosphates as substrates. This is DNA-directed RNA polymerase subunit beta from Alkaliphilus oremlandii (strain OhILAs) (Clostridium oremlandii (strain OhILAs)).